The chain runs to 1091 residues: Voltage-dependent calcium channel subunit alpha-2/delta-3 (1091 aa).

The N-terminal stretch at 1 to 28 (MAGPGSPRRASRGASALLAAALLYAALG) is a signal peptide. At 29-1068 (DVVRSEQQIP…HPEENARECG (1040 aa)) the chain is on the extracellular side. N166 carries an N-linked (GlcNAc...) asparagine glycan. The region spanning 256–438 (DVVILVDVSG…ENVMEYLHVL (183 aa)) is the VWFA domain. 3 residues coordinate a divalent metal cation: D262, S264, and S266. Positions 262-266 (DVSGS) match the MIDAS-like motif motif. N309 carries an N-linked (GlcNAc...) asparagine glycan. C412 and C1055 form a disulfide bridge. The 98-residue stretch at 452-549 (WTEAYIDSTL…RLLYEEGKKR (98 aa)) folds into the Cache domain. 3 N-linked (GlcNAc...) asparagine glycosylation sites follow: N553, N632, and N793. Position 924 is a phosphotyrosine (Y924). Residues 1069 to 1089 (GAPSLQAQTVLLLLPLLLMLF) form a helical membrane-spanning segment. The Cytoplasmic segment spans residues 1090 to 1091 (SR).

It belongs to the calcium channel subunit alpha-2/delta family. Dimer formed of alpha-2-2 and delta-2 chains; disulfide-linked. Voltage-dependent calcium channels are multisubunit complexes, consisting of alpha-1 (CACNA1), alpha-2 (CACNA2D), beta (CACNB) and delta (CACNA2D) subunits in a 1:1:1:1 ratio. In terms of processing, N-glycosylated. Post-translationally, may be proteolytically processed into subunits alpha-2-3 and delta-3 that are disulfide-linked. It is however unclear whether such cleavage really takes place in vivo and has a functional role. In terms of tissue distribution, only detected in brain. Not present in lung, testis, aorta, spleen, jejunum, ventricular muscle and kidney (at protein level). According to PubMed:11687876, it is brain-specific, while according to PubMed:11245980, it is widely expressed.

The protein localises to the membrane. The alpha-2/delta subunit of voltage-dependent calcium channels regulates calcium current density and activation/inactivation kinetics of the calcium channel. Acts as a regulatory subunit for P/Q-type calcium channel (CACNA1A), N-type (CACNA1B), L-type (CACNA1C OR CACNA1D) but not T-type (CACNA1G). This is Voltage-dependent calcium channel subunit alpha-2/delta-3 (CACNA2D3) from Homo sapiens (Human).